Reading from the N-terminus, the 416-residue chain is Alpha-1,3/1,6-mannosyltransferase ALG2 (416 aa).

At 1-84 (MAEEQGRERD…LPRGLGWGGR (84 aa)) the chain is on the cytoplasmic side. Residues 85-105 (GAAVCAYVRMVFLALYVLFLA) constitute an intramembrane region (helical). At 106-416 (DEEFDVVVCD…LYRYVTKLLV (311 aa)) the chain is on the cytoplasmic side.

The protein belongs to the glycosyltransferase group 1 family. Glycosyltransferase 4 subfamily.

Its subcellular location is the endoplasmic reticulum membrane. It catalyses the reaction a beta-D-Man-(1-&gt;4)-beta-D-GlcNAc-(1-&gt;4)-alpha-D-GlcNAc-diphospho-di-trans,poly-cis-dolichol + GDP-alpha-D-mannose = an alpha-D-Man-(1-&gt;3)-beta-D-Man-(1-&gt;4)-beta-D-GlcNAc-(1-&gt;4)-alpha-D-GlcNAc-diphospho-di-trans,poly-cis-dolichol + GDP + H(+). The enzyme catalyses an alpha-D-Man-(1-&gt;3)-beta-D-Man-(1-&gt;4)-beta-D-GlcNAc-(1-&gt;4)-alpha-D-GlcNAc-diphospho-di-trans,poly-cis-dolichol + GDP-alpha-D-mannose = an alpha-D-Man-(1-&gt;3)-[alpha-D-Man-(1-&gt;6)]-beta-D-Man-(1-&gt;4)-beta-D-GlcNAc-(1-&gt;4)-alpha-D-GlcNAc-diphospho-di-trans,poly-cis-dolichol + GDP + H(+). It carries out the reaction a beta-D-Man-(1-&gt;4)-beta-D-GlcNAc-(1-&gt;4)-alpha-D-GlcNAc-diphospho-di-trans,poly-cis-dolichol + GDP-alpha-D-mannose = an alpha-D-Man-(1-&gt;6)-beta-D-Man-(1-&gt;4)-beta-D-GlcNAc-(1-&gt;4)-alpha-D-GlcNAc-diphospho-di-trans,poly-cis-dolichol + GDP + H(+). The catalysed reaction is an alpha-D-Man-(1-&gt;6)-beta-D-Man-(1-&gt;4)-beta-D-GlcNAc-(1-&gt;4)-alpha-D-GlcNAc-diphospho-di-trans,poly-cis-dolichol + GDP-alpha-D-mannose = an alpha-D-Man-(1-&gt;3)-[alpha-D-Man-(1-&gt;6)]-beta-D-Man-(1-&gt;4)-beta-D-GlcNAc-(1-&gt;4)-alpha-D-GlcNAc-diphospho-di-trans,poly-cis-dolichol + GDP + H(+). Its pathway is protein modification; protein glycosylation. Mannosyltransferase that operates in the biosynthetic pathway of dolichol-linked oligosaccharides, the glycan precursors employed in protein asparagine (N)-glycosylation. The assembly of dolichol-linked oligosaccharides begins on the cytosolic side of the endoplasmic reticulum membrane and finishes in its lumen. The sequential addition of sugars to dolichol pyrophosphate produces dolichol-linked oligosaccharides containing fourteen sugars, including two GlcNAcs, nine mannoses and three glucoses. Once assembled, the oligosaccharide is transferred from the lipid to nascent proteins by oligosaccharyltransferases. Catalyzes, on the cytoplasmic face of the endoplasmic reticulum, the addition of the second and third mannose residues to the dolichol-linked oligosaccharide chain, to produce Man3GlcNAc(2)-PP-dolichol core oligosaccharide. Man3GlcNAc(2)-PP-dolichol is a substrate for ALG11, the following enzyme in the biosynthetic pathway. While both alpha 1,3 and alpha 1,6 linkages are possible, the sequential addition of alpha 1,3 followed by alpha 1,6 is probably the preferred route. The chain is Alpha-1,3/1,6-mannosyltransferase ALG2 (ALG2) from Homo sapiens (Human).